A 418-amino-acid chain; its full sequence is Glutamyl-tRNA reductase (418 aa).

Residues 49–52 (TCNR), S108, 113–115 (EPQ), and Q119 contribute to the substrate site. Residue C50 is the Nucleophile of the active site. Position 188 to 193 (188 to 193 (GAGETI)) interacts with NADP(+).

Belongs to the glutamyl-tRNA reductase family. As to quaternary structure, homodimer.

The catalysed reaction is (S)-4-amino-5-oxopentanoate + tRNA(Glu) + NADP(+) = L-glutamyl-tRNA(Glu) + NADPH + H(+). It participates in porphyrin-containing compound metabolism; protoporphyrin-IX biosynthesis; 5-aminolevulinate from L-glutamyl-tRNA(Glu): step 1/2. Catalyzes the NADPH-dependent reduction of glutamyl-tRNA(Glu) to glutamate 1-semialdehyde (GSA). In Aliivibrio salmonicida (strain LFI1238) (Vibrio salmonicida (strain LFI1238)), this protein is Glutamyl-tRNA reductase.